A 129-amino-acid polypeptide reads, in one-letter code: Small ribosomal subunit protein uS11 (129 aa).

This sequence belongs to the universal ribosomal protein uS11 family. Part of the 30S ribosomal subunit. Interacts with proteins S7 and S18. Binds to IF-3.

Functionally, located on the platform of the 30S subunit, it bridges several disparate RNA helices of the 16S rRNA. Forms part of the Shine-Dalgarno cleft in the 70S ribosome. The polypeptide is Small ribosomal subunit protein uS11 (Salmonella typhi).